Consider the following 171-residue polypeptide: Ribosome maturation factor RimM (171 aa).

The 73-residue stretch at 97 to 169 folds into the PRC barrel domain; the sequence is DGEFYYHEII…RVDVSIMEGL (73 aa).

It belongs to the RimM family. Binds ribosomal protein uS19.

The protein localises to the cytoplasm. Its function is as follows. An accessory protein needed during the final step in the assembly of 30S ribosomal subunit, possibly for assembly of the head region. Essential for efficient processing of 16S rRNA. May be needed both before and after RbfA during the maturation of 16S rRNA. It has affinity for free ribosomal 30S subunits but not for 70S ribosomes. The chain is Ribosome maturation factor RimM from Lactococcus lactis subsp. lactis (strain IL1403) (Streptococcus lactis).